The following is a 67-amino-acid chain: ATP synthase F(0) complex subunit 8 (67 aa).

The helical transmembrane segment at 8–24 (TWLIMILSMILTLFITF) threads the bilayer. Lys54 carries the N6-acetyllysine; alternate modification. Lys54 carries the post-translational modification N6-succinyllysine; alternate. Lys57 bears the N6-acetyllysine mark.

The protein belongs to the ATPase protein 8 family. Component of the ATP synthase complex composed at least of ATP5F1A/subunit alpha, ATP5F1B/subunit beta, ATP5MC1/subunit c (homooctomer), MT-ATP6/subunit a, MT-ATP8/subunit 8, ATP5ME/subunit e, ATP5MF/subunit f, ATP5MG/subunit g, ATP5MK/subunit k, ATP5MJ/subunit j, ATP5F1C/subunit gamma, ATP5F1D/subunit delta, ATP5F1E/subunit epsilon, ATP5PF/subunit F6, ATP5PB/subunit b, ATP5PD/subunit d, ATP5PO/subunit OSCP. ATP synthase complex consists of a soluble F(1) head domain (subunits alpha(3) and beta(3)) - the catalytic core - and a membrane F(0) domain - the membrane proton channel (subunits c, a, 8, e, f, g, k and j). These two domains are linked by a central stalk (subunits gamma, delta, and epsilon) rotating inside the F1 region and a stationary peripheral stalk (subunits F6, b, d, and OSCP). Interacts with PRICKLE3.

Its subcellular location is the mitochondrion membrane. Subunit 8, of the mitochondrial membrane ATP synthase complex (F(1)F(0) ATP synthase or Complex V) that produces ATP from ADP in the presence of a proton gradient across the membrane which is generated by electron transport complexes of the respiratory chain. ATP synthase complex consist of a soluble F(1) head domain - the catalytic core - and a membrane F(1) domain - the membrane proton channel. These two domains are linked by a central stalk rotating inside the F(1) region and a stationary peripheral stalk. During catalysis, ATP synthesis in the catalytic domain of F(1) is coupled via a rotary mechanism of the central stalk subunits to proton translocation. In vivo, can only synthesize ATP although its ATP hydrolase activity can be activated artificially in vitro. Part of the complex F(0) domain. The polypeptide is ATP synthase F(0) complex subunit 8 (Phoca vitulina (Harbor seal)).